We begin with the raw amino-acid sequence, 310 residues long: Transcription initiation factor TFIID subunit 8 (310 aa).

The segment at 1 to 30 (MADAAATAGAGGSGTRSGSKQSTNPADNYH) is disordered. Position 2 is an N-acetylalanine (Ala-2). A Histone-fold; involved in forming hexamer structure in TFIID complex domain is found at 35 to 102 (RTLQVVVSSL…IVVTLVEMGF (68 aa)). Thr-130 carries the phosphothreonine modification. The segment at 262–310 (DSGAEKENTSVLQQNPSLSGSRNGEENIIDNPYLRPVKKPKIRRKKSLS) is disordered. Over residues 270 to 283 (TSVLQQNPSLSGSR) the composition is skewed to polar residues. A Phosphoserine modification is found at Ser-271. The Nuclear localization signal signature appears at 294–307 (YLRPVKKPKIRRKK). Residues 297 to 310 (PVKKPKIRRKKSLS) are compositionally biased toward basic residues.

This sequence belongs to the TAF8 family. In terms of assembly, component of the TFIID basal transcription factor complex, composed of TATA-box-binding protein TBP, and a number of TBP-associated factors (TAFs), including TAF1, TAF2, TAF3, TAF4, TAF5, TAF6, TAF7, TAF8, TAF9, TAF10, TAF11, TAF12 and TAF13. Interacts with TBP, TAF1, TAF6, TAF10, TAF11 and TAF13. Component also of a small TAF complex (SMAT) containing TAF8, TAF10 and SUPT7L. Forms a heterodimer with TAF10. Interaction with TAF10 is mediated mainly via its histone fold domain while interaction with SUPT7L is via its C-terminal region.

The protein resides in the nucleus. The protein localises to the cytoplasm. In terms of biological role, the TFIID basal transcription factor complex plays a major role in the initiation of RNA polymerase II (Pol II)-dependent transcription. TFIID recognizes and binds promoters with or without a TATA box via its subunit TBP, a TATA-box-binding protein, and promotes assembly of the pre-initiation complex (PIC). The TFIID complex consists of TBP and TBP-associated factors (TAFs), including TAF1, TAF2, TAF3, TAF4, TAF5, TAF6, TAF7, TAF8, TAF9, TAF10, TAF11, TAF12 and TAF13. The TFIID complex structure can be divided into 3 modules TFIID-A, TFIID-B, and TFIID-C. TAF8 is involved in forming the TFIID-B module, together with TAF5. Mediates both basal and activator-dependent transcription. Plays a role in the differentiation of preadipocyte fibroblasts to adipocytes, however, does not seem to play a role in differentiation of myoblasts. Required for the integration of TAF10 in the TAF complex. May be important for survival of cells of the inner cell mass which constitute the pluripotent cell population of the early embryo. The polypeptide is Transcription initiation factor TFIID subunit 8 (TAF8) (Homo sapiens (Human)).